A 657-amino-acid polypeptide reads, in one-letter code: MGELLAGRPRPLGSHFDGEGVNFALFSSGASRVELCIFDGLREQRLPLTARTGDIWHGYLPDAQPGLCYGYRVDGAFDPSRGQRFNANKLLLDPCARQMDGWVVDDQRLHGGYHQPDPSDSAEVMPPSVVVDEHYDWQGDRLPRTPWSQTVLYEAHVRGLTRRHPGIPAAIRGTYAALAHPVMLDYLTQLGVTALELMPVQQHADEPRLQSMGLRNYWGYNTLLPFAVDNSLAASDDPLNEFRDTVRALHQAGIEVILDVVFNHSAELDVDGPTLTLRGIDNASYYWLTENGDYHNWAGCGNVLRLEHPAVLHWVIECLTFWHEVCHVDGFRFDLATILGRLPDFSSSAPFFTALRNHRSLRDCKLIAEPWDISPGGYQLGQFPAPFAEWNDRFRDDMRRFWLHGDLPIGVLARRFAASSEVFERGSRQPWASVNMLTSHDGFTLRDLVCFNHKHNDANGEQNRDGTNSNFSFNHGTEGLEADETTQARRRVSQQALLTTLLLSQGTPMLLAGDEFGNSQQGNNNAYCQDNALAWLHWDQADDALLAFTSGLIRLRRSIPALQRGRWWRDDDEDDVRWLNAQGEALTPYEWEQGTHQLQIQLSERWLLLVNATPQVSDFSLPEGEWRVAPPFSATDHLLDGQTWRGQANAVCVLVKQ.

Catalysis depends on Asp334, which acts as the Nucleophile. The active-site Proton donor is Glu369. Positions 458-485 are disordered; that stretch reads ANGEQNRDGTNSNFSFNHGTEGLEADET. Positions 465-475 are enriched in polar residues; the sequence is DGTNSNFSFNH.

The protein belongs to the glycosyl hydrolase 13 family.

It is found in the cytoplasm. It catalyses the reaction Hydrolysis of (1-&gt;6)-alpha-D-glucosidic linkages to branches with degrees of polymerization of three or four glucose residues in limit dextrin.. The protein operates within glycan degradation; glycogen degradation. Its activity is regulated as follows. Slightly activated by Ca(2+). Inhibited by divalent cations such as Zn(2+), Cu(2+), Fe(2+), Mg(2+), Mn(2+), but only slightly inhibited by EDTA. In terms of biological role, removes maltotriose and maltotetraose chains that are attached by 1,6-alpha-linkage to the limit dextrin main chain, generating a debranched limit dextrin. Hydrolyzes the alpha-1,6-glycosidic linkages in amylopectin while does not hydrolyze the alpha-1,4-glycosidic linkages in amylose. Native glycogen is a poor substrate. The chain is Glycogen debranching enzyme from Dickeya chrysanthemi (Pectobacterium chrysanthemi).